The following is a 417-amino-acid chain: Serine hydroxymethyltransferase (417 aa).

(6S)-5,6,7,8-tetrahydrofolate-binding positions include leucine 121 and 125–127 (GHL). Residue lysine 229 is modified to N6-(pyridoxal phosphate)lysine. 355 to 357 (SPF) provides a ligand contact to (6S)-5,6,7,8-tetrahydrofolate.

Belongs to the SHMT family. In terms of assembly, homodimer. Pyridoxal 5'-phosphate is required as a cofactor.

The protein localises to the cytoplasm. The enzyme catalyses (6R)-5,10-methylene-5,6,7,8-tetrahydrofolate + glycine + H2O = (6S)-5,6,7,8-tetrahydrofolate + L-serine. It participates in one-carbon metabolism; tetrahydrofolate interconversion. It functions in the pathway amino-acid biosynthesis; glycine biosynthesis; glycine from L-serine: step 1/1. Functionally, catalyzes the reversible interconversion of serine and glycine with tetrahydrofolate (THF) serving as the one-carbon carrier. This reaction serves as the major source of one-carbon groups required for the biosynthesis of purines, thymidylate, methionine, and other important biomolecules. Also exhibits THF-independent aldolase activity toward beta-hydroxyamino acids, producing glycine and aldehydes, via a retro-aldol mechanism. This is Serine hydroxymethyltransferase from Photorhabdus laumondii subsp. laumondii (strain DSM 15139 / CIP 105565 / TT01) (Photorhabdus luminescens subsp. laumondii).